Here is a 115-residue protein sequence, read N- to C-terminus: DNA-binding protein APE_1087b (115 aa).

It belongs to the PDCD5 family.

This is DNA-binding protein APE_1087b from Aeropyrum pernix (strain ATCC 700893 / DSM 11879 / JCM 9820 / NBRC 100138 / K1).